Reading from the N-terminus, the 264-residue chain is Adenosylcobinamide-GDP ribazoletransferase (264 aa).

Transmembrane regions (helical) follow at residues 10-30 (LFFI…VGYT), 43-63 (LVGA…AQVW), 113-133 (LGSY…VALY), 141-161 (VQAL…PVAL), 183-203 (VSDA…AAAW), 205-225 (LGAS…LAAF), and 243-263 (GAAQ…GVWF).

It belongs to the CobS family. Requires Mg(2+) as cofactor.

It is found in the cell inner membrane. The catalysed reaction is alpha-ribazole + adenosylcob(III)inamide-GDP = adenosylcob(III)alamin + GMP + H(+). It carries out the reaction alpha-ribazole 5'-phosphate + adenosylcob(III)inamide-GDP = adenosylcob(III)alamin 5'-phosphate + GMP + H(+). It participates in cofactor biosynthesis; adenosylcobalamin biosynthesis; adenosylcobalamin from cob(II)yrinate a,c-diamide: step 7/7. Functionally, joins adenosylcobinamide-GDP and alpha-ribazole to generate adenosylcobalamin (Ado-cobalamin). Also synthesizes adenosylcobalamin 5'-phosphate from adenosylcobinamide-GDP and alpha-ribazole 5'-phosphate. The polypeptide is Adenosylcobinamide-GDP ribazoletransferase (Leptothrix cholodnii (strain ATCC 51168 / LMG 8142 / SP-6) (Leptothrix discophora (strain SP-6))).